The primary structure comprises 391 residues: Winged helix repair factor 1 (391 aa).

2 stretches are compositionally biased toward low complexity: residues methionine 1 to isoleucine 24 and leucine 49 to asparagine 63. The segment at methionine 1–threonine 95 is disordered. Acidic residues predominate over residues glycine 64–glutamate 74. Residues asparagine 82 to threonine 95 show a composition bias toward low complexity.

This sequence belongs to the STK19 family.

Its subcellular location is the nucleus. In terms of biological role, DNA-binding protein which is required for efficient transcription-coupled nucleotide excision repair. The sequence is that of Winged helix repair factor 1 from Dictyostelium discoideum (Social amoeba).